Reading from the N-terminus, the 355-residue chain is Cyclic nucleotide-gated potassium channel mll3241 (355 aa).

Residues 1–12 (MSVLPFLRIYAP) lie on the Cytoplasmic side of the membrane. The helical transmembrane segment at 13–30 (LNAVLAAPGLLAVAALTI) threads the bilayer. Topologically, residues 31 to 38 (PDMSGRSR) are periplasmic. A helical membrane pass occupies residues 39 to 61 (LALAALLAVIWGAYLLQLAATLL). Over 62-74 (KRRAGVVRDRTPK) the chain is Cytoplasmic. A helical membrane pass occupies residues 75–94 (IAIDVLAVLVPLAAFLLDGS). A helical transmembrane segment spans residues 95–112 (PDWSLYCAVWLLKPLRDS). At 113-129 (TFFPVLGRVLANEARNL) the chain is on the cytoplasmic side. Residues 130–150 (IGVTTLFGVVLFAVALAAYVI) traverse the membrane as a helical segment. The Periplasmic segment spans residues 151-161 (ERDIQPEKFGS). An intramembrane region (pore-forming) is located at residues 162 to 180 (IPQAMWWAVVTLSTTGYGD). The Selectivity filter motif lies at 175 to 180 (TTGYGD). The Periplasmic portion of the chain corresponds to 181 to 185 (TIPQS). A helical membrane pass occupies residues 186 to 210 (FAGRVLAGAVMMSGIGIFGLWAGIL). Topologically, residues 211-355 (ATGFYQEVRR…LERRGAAASA (145 aa)) are cytoplasmic. 3',5'-cyclic AMP-binding positions include 297-298 (GE), 307-308 (RS), and R348.

Belongs to the potassium channel family. Homotetramer.

The protein resides in the cell membrane. Its function is as follows. Cyclic nucleotide-regulated potassium channel activated by cAMP. This chain is Cyclic nucleotide-gated potassium channel mll3241, found in Mesorhizobium japonicum (strain LMG 29417 / CECT 9101 / MAFF 303099) (Mesorhizobium loti (strain MAFF 303099)).